We begin with the raw amino-acid sequence, 145 residues long: D-aminoacyl-tRNA deacylase (145 aa).

The Gly-cisPro motif, important for rejection of L-amino acids signature appears at 137–138; that stretch reads GP.

Belongs to the DTD family. As to quaternary structure, homodimer.

The protein localises to the cytoplasm. The catalysed reaction is glycyl-tRNA(Ala) + H2O = tRNA(Ala) + glycine + H(+). It catalyses the reaction a D-aminoacyl-tRNA + H2O = a tRNA + a D-alpha-amino acid + H(+). An aminoacyl-tRNA editing enzyme that deacylates mischarged D-aminoacyl-tRNAs. Also deacylates mischarged glycyl-tRNA(Ala), protecting cells against glycine mischarging by AlaRS. Acts via tRNA-based rather than protein-based catalysis; rejects L-amino acids rather than detecting D-amino acids in the active site. By recycling D-aminoacyl-tRNA to D-amino acids and free tRNA molecules, this enzyme counteracts the toxicity associated with the formation of D-aminoacyl-tRNA entities in vivo and helps enforce protein L-homochirality. This Klebsiella pneumoniae (strain 342) protein is D-aminoacyl-tRNA deacylase.